Here is a 228-residue protein sequence, read N- to C-terminus: Probable methylthioribulose-1-phosphate dehydratase (228 aa).

Residue C87 coordinates substrate. Zn(2+) contacts are provided by H105 and H107. E129 serves as the catalytic Proton donor/acceptor. Position 185 (H185) interacts with Zn(2+).

This sequence belongs to the aldolase class II family. MtnB subfamily. Requires Zn(2+) as cofactor.

The protein localises to the cytoplasm. The catalysed reaction is 5-(methylsulfanyl)-D-ribulose 1-phosphate = 5-methylsulfanyl-2,3-dioxopentyl phosphate + H2O. Its pathway is amino-acid biosynthesis; L-methionine biosynthesis via salvage pathway; L-methionine from S-methyl-5-thio-alpha-D-ribose 1-phosphate: step 2/6. In terms of biological role, catalyzes the dehydration of methylthioribulose-1-phosphate (MTRu-1-P) into 2,3-diketo-5-methylthiopentyl-1-phosphate (DK-MTP-1-P). The sequence is that of Probable methylthioribulose-1-phosphate dehydratase from Drosophila willistoni (Fruit fly).